Here is a 2434-residue protein sequence, read N- to C-terminus: ATP-binding cassette sub-family A member 2 (2434 aa).

An N-linked (GlcNAc...) asparagine glycan is attached at N14. Helical transmembrane passes span 22 to 42 (PWVL…LLGL) and 54 to 74 (AFYT…QSLC). N-linked (GlcNAc...) asparagine glycans are attached at residues N89, N168, and N173. The residue at position 271 (Q271) is an N5-methylglutamine. Residues N305, N368, N379, N420, N432, N476, N484, N494, N530, N549, N590, N600, and N628 are each glycosylated (N-linked (GlcNAc...) asparagine). Over residues 354–369 (RAPAPQAGSPSGPANS) the composition is skewed to low complexity. The tract at residues 354 to 396 (RAPAPQAGSPSGPANSTGVGANTGPNTTVEEGTQSPVTPASPD) is disordered. The span at 370 to 396 (TGVGANTGPNTTVEEGTQSPVTPASPD) shows a compositional bias: polar residues. The next 6 helical transmembrane spans lie at 699 to 719 (FLFV…VYSV), 750 to 770 (VAWF…LTAI), 782 to 802 (VLII…FCFL), 813 to 833 (ASAC…YVAI), 857 to 877 (AFGL…GIQW), and 893 to 913 (LLAV…TWYI). One can recognise an ABC transporter 1 domain in the interval 990 to 1221 (VCVDKLTKVY…YGDGYRLTLV (232 aa)). 1024 to 1031 (GHNGAGKT) is a binding site for ATP. The tract at residues 1225–1246 (AEPGTSQEPGMASSPSGRPQLS) is disordered. Residues 1228-1246 (GTSQEPGMASSPSGRPQLS) are compositionally biased toward polar residues. Phosphoserine is present on S1238. N1247 carries N-linked (GlcNAc...) asparagine glycosylation. A phosphoserine mark is found at S1327 and S1331. A helical transmembrane segment spans residues 1461-1481 (ILLPAFFVCVAMTVALSVPEI). N1496, N1549, and N1557 each carry an N-linked (GlcNAc...) asparagine glycan. Residues 1587 to 1606 (NFVPPPPSPAPSDSPLSPDE) are disordered. The segment covering 1589–1598 (VPPPPSPAPS) has biased composition (pro residues). Residues N1613, N1678, and N1776 are each glycosylated (N-linked (GlcNAc...) asparagine). Transmembrane regions (helical) follow at residues 1793 to 1813 (VVIA…FVVF), 1842 to 1862 (VWDM…LFVF), 1873 to 1893 (FPAV…IMYP), 1906 to 1926 (VFLI…TFLL), and 1992 to 2012 (GLVA…MCQY). The 236-residue stretch at 2051-2286 (VKIENLTKVY…FGDGYMITVR (236 aa)) folds into the ABC transporter 2 domain. Residue N2055 is glycosylated (N-linked (GlcNAc...) asparagine). 2088-2095 (GVNGAGKT) contributes to the ATP binding site. T2411 bears the Phosphothreonine mark.

Belongs to the ABC transporter superfamily. ABCA family. N-glycosylated. Post-translationally, methylated at Gln-271 by N6AMT1. As to expression, expressed at high levels in brain, at moderate levels in heart, kidney and lung, and at low levels in skeletal muscle, stomach, spleen, colon and pancreas. Not detected in the liver or small intestine. In brain, highly expressed in white matter and detected in oligodendrocytes. Expressed in cerebellum as well as the anterior commissure. Expressed mainly in the white matter but is also scattered in gray matter throughout the whole brain. Expressed in myelinating cells of both ventral and dorsal restricted regions in newborn spinal cord. Expressed in non-myelin-forming as well as in myelin-forming Schwann cells in the sciatic nerve.

It is found in the endosome membrane. The protein resides in the lysosome membrane. Probable transporter, its natural substrate has not been found yet. May have a role in macrophage lipid metabolism and neural development. May play a role in myelination, perhaps as a transporter for certain kinds of myelin chemical components. May play an important role in gamma-secretase processing of APP and thus in amyloid-beta peptide generation. Regulates esterification of plasma membrane cholesterol by modulation of sphingolipid metabolism. Functionally, probable lipid transporter that modulates cholesterol sequestration in the late endosome/lysosome by regulating the intracellular sphingolipid metabolism, in turn participates in cholesterol homeostasis. May alter the transbilayer distribution of ceramide in the intraluminal membrane lipid bilayer, favoring its retention in the outer leaflet that results in increased acid ceramidase activity in the late endosome/lysosome, facilitating ceramide deacylation to sphingosine leading to the sequestration of free cholesterol in lysosomes. In addition regulates amyloid-beta production either by activating a signaling pathway that regulates amyloid precursor protein transcription through the modulation of sphingolipid metabolism or through its role in gamma-secretase processing of APP. May play a role in myelin formation. This chain is ATP-binding cassette sub-family A member 2, found in Rattus norvegicus (Rat).